The sequence spans 128 residues: Large ribosomal subunit protein bL12 (128 aa).

This sequence belongs to the bacterial ribosomal protein bL12 family. Homodimer. Part of the ribosomal stalk of the 50S ribosomal subunit. Forms a multimeric L10(L12)X complex, where L10 forms an elongated spine to which 2 to 4 L12 dimers bind in a sequential fashion. Binds GTP-bound translation factors.

Forms part of the ribosomal stalk which helps the ribosome interact with GTP-bound translation factors. Is thus essential for accurate translation. This is Large ribosomal subunit protein bL12 from Corynebacterium kroppenstedtii (strain DSM 44385 / JCM 11950 / CIP 105744 / CCUG 35717).